Here is an 84-residue protein sequence, read N- to C-terminus: Putative protein BCE-1 (84 aa).

The protein is Putative protein BCE-1 (BCE1) of Homo sapiens (Human).